Here is a 176-residue protein sequence, read N- to C-terminus: Centromere protein R (176 aa).

A Glycyl lysine isopeptide (Lys-Gly) (interchain with G-Cter in SUMO2) cross-link involves residue Lys-8. A Phosphoserine modification is found at Ser-17. The DD1 stretch occupies residues Pro-20–Pro-50. A Glycyl lysine isopeptide (Lys-Gly) (interchain with G-Cter in SUMO2) cross-link involves residue Lys-22. Ser-28 carries the phosphoserine modification. Residues Pro-34–Ala-48 show a composition bias toward polar residues. Residues Pro-34–Thr-78 are disordered. A compositionally biased stretch (basic and acidic residues) spans Lys-51–Lys-65. The short motif at Thr-63 to Arg-66 is the Nuclear localization signal element. A Phosphoserine modification is found at Ser-71. A coiled-coil region spans residues Arg-82–Leu-112. The LXXIL motif motif lies at Leu-171–Leu-175.

As to quaternary structure, homodimer; mediated by the coiled coil domain. Interacts with CCNA2 and MTA1. Interacts with NFKB1 NF-kappa-B subunit. Component of the CENPA-CAD complex, composed of CENPI, CENPK, CENPL, CENPO, CENPP, CENPQ, CENPR and CENPS. The CENPA-CAD complex interacts with the CENPA-NAC complex, at least composed of CENPA, CENPC, CENPH, CENPM, CENPN, CENPT and CENPU. Interacts with TASOR. Expressed in the spermatogonia and spermatocytes.

It is found in the nucleus. It localises to the chromosome. Its subcellular location is the centromere. The protein localises to the kinetochore. Functionally, transcription coregulator that can have both coactivator and corepressor functions. Involved in the coactivation of nuclear receptors for retinoid X (RXRs) and thyroid hormone (TRs) in a ligand-dependent fashion. In contrast, it does not coactivate nuclear receptors for retinoic acid, vitamin D, progesterone receptor, nor glucocorticoid. Acts as a coactivator for estrogen receptor alpha. Acts as a transcriptional corepressor via its interaction with the NFKB1 NF-kappa-B subunit, possibly by interfering with the transactivation domain of NFKB1. Induces apoptosis in breast cancer cells, but not in other cancer cells, via a caspase-2 mediated pathway that involves mitochondrial membrane permeabilization but does not require other caspases. May also act as an inhibitor of cyclin A-associated kinase. Also acts a component of the CENPA-CAD (nucleosome distal) complex, a complex recruited to centromeres which is involved in assembly of kinetochore proteins, mitotic progression and chromosome segregation. May be involved in incorporation of newly synthesized CENPA into centromeres via its interaction with the CENPA-NAC complex. This chain is Centromere protein R (Itgb3bp), found in Mus musculus (Mouse).